Reading from the N-terminus, the 188-residue chain is dCTP deaminase (188 aa).

DCTP-binding positions include 111–116 (KSTYAR), 135–137 (TLE), Gln-156, Tyr-170, and Gln-180. The active-site Proton donor/acceptor is the Glu-137.

The protein belongs to the dCTP deaminase family. As to quaternary structure, homotrimer.

The enzyme catalyses dCTP + H2O + H(+) = dUTP + NH4(+). It participates in pyrimidine metabolism; dUMP biosynthesis; dUMP from dCTP (dUTP route): step 1/2. Its function is as follows. Catalyzes the deamination of dCTP to dUTP. This Nitrosococcus oceani (strain ATCC 19707 / BCRC 17464 / JCM 30415 / NCIMB 11848 / C-107) protein is dCTP deaminase.